Reading from the N-terminus, the 281-residue chain is Probable endonuclease 4 (281 aa).

9 residues coordinate Zn(2+): histidine 69, histidine 109, glutamate 145, aspartate 179, histidine 182, histidine 216, aspartate 229, histidine 231, and glutamate 261.

The protein belongs to the AP endonuclease 2 family. Requires Zn(2+) as cofactor.

It carries out the reaction Endonucleolytic cleavage to 5'-phosphooligonucleotide end-products.. In terms of biological role, endonuclease IV plays a role in DNA repair. It cleaves phosphodiester bonds at apurinic or apyrimidinic (AP) sites, generating a 3'-hydroxyl group and a 5'-terminal sugar phosphate. In Glaesserella parasuis serovar 5 (strain SH0165) (Haemophilus parasuis), this protein is Probable endonuclease 4.